Consider the following 85-residue polypeptide: Prosialokinin (85 aa).

Residues 1 to 23 form the signal peptide; the sequence is MNMFITVQIVIVLVLAVLSEAAS. The propeptide occupies 24 to 74; the sequence is LPTATERKDAMDEGPNQSDEPEGSVADPSTKDDDYSDSLKQDEKYYKVRLL. The disordered stretch occupies residues 26–61; it reads TATERKDAMDEGPNQSDEPEGSVADPSTKDDDYSDS. The segment covering 52 to 61 has biased composition (basic and acidic residues); it reads STKDDDYSDS. A Methionine amide modification is found at methionine 84.

This sequence belongs to the tachykinin family. As to expression, expressed exclusively in the medial lobe of female salivary gland. Not detected in female carcass without head and salivary glands. Not detected in male tissues.

The protein resides in the secreted. Functionally, vasodilatory peptide. Facilitates mosquito blood feeding on vertebrate host. Induces nitric oxide (NO) release in blood vessels through the activation of the nitric oxide synthase (NOS3). Enhances endothelial permeability and induces edema at the site of inoculation in the host. Induces host smooth muscle contraction. Down-regulates production of Th1 cytokines, such as IL2 and IFN-gamma (IFNG), in mouse splenocytes. Up-regulates production of Th2 cytokines, such as IL4 and IL10, in mouse splenocytes. Promotes recruitment of host leukocytes, especially neutrophils and CD8+ T cells, to the bite site. Modulates cytokine production by host macrophages. Modulates populations of monocytes/macrophages, plasmacytoid dendritic cells, B cells, CD4+ T cells, NK and NKT cells, shifting mammalian immunity towards Th2 responses. Its function is as follows. (Microbial infection) Promotes Semliki Forest virus infection in the host. (Microbial infection) Does not affect Zika virus replication in the host. This Aedes aegypti (Yellowfever mosquito) protein is Prosialokinin.